The chain runs to 399 residues: Tyrosine--tRNA ligase (399 aa).

Tyr-36 is an L-tyrosine binding site. Residues 41–50 (PTAPSLHIGN) carry the 'HIGH' region motif. L-tyrosine-binding residues include Tyr-166 and Gln-170. The 'KMSKS' region motif lies at 226-230 (KMGKS). Position 229 (Lys-229) interacts with ATP. The 64-residue stretch at 332 to 395 (TRLVDVIVDL…KKRFVTVQVI (64 aa)) folds into the S4 RNA-binding domain.

It belongs to the class-I aminoacyl-tRNA synthetase family. TyrS type 1 subfamily. As to quaternary structure, homodimer.

It is found in the cytoplasm. The catalysed reaction is tRNA(Tyr) + L-tyrosine + ATP = L-tyrosyl-tRNA(Tyr) + AMP + diphosphate + H(+). Its function is as follows. Catalyzes the attachment of tyrosine to tRNA(Tyr) in a two-step reaction: tyrosine is first activated by ATP to form Tyr-AMP and then transferred to the acceptor end of tRNA(Tyr). The protein is Tyrosine--tRNA ligase of Mycoplasma pneumoniae (strain ATCC 29342 / M129 / Subtype 1) (Mycoplasmoides pneumoniae).